The chain runs to 322 residues: ATP-dependent 6-phosphofructokinase 1 (322 aa).

G11 is a binding site for ATP. 21–25 is a binding site for ADP; the sequence is RAVVR. ATP contacts are provided by residues 72-73 and 102-105; these read RS and GDGT. D103 provides a ligand contact to Mg(2+). Residue 126–128 participates in substrate binding; it reads TID. The Proton acceptor role is filled by D128. R155 provides a ligand contact to ADP. Substrate is bound by residues R163 and 170–172; that span reads MGR. ADP is bound by residues 186-188, R212, and 214-216; these read GAE and KKS. Substrate-binding positions include E223, R246, and 252–255; that span reads HIQR.

The protein belongs to the phosphofructokinase type A (PFKA) family. ATP-dependent PFK group I subfamily. Prokaryotic clade 'B1' sub-subfamily. In terms of assembly, homotetramer. It depends on Mg(2+) as a cofactor.

The protein localises to the cytoplasm. The enzyme catalyses beta-D-fructose 6-phosphate + ATP = beta-D-fructose 1,6-bisphosphate + ADP + H(+). Its pathway is carbohydrate degradation; glycolysis; D-glyceraldehyde 3-phosphate and glycerone phosphate from D-glucose: step 3/4. Allosterically activated by ADP and other diphosphonucleosides. Allosterically inhibited by phosphoenolpyruvate which induces the dissociation of the active tetramer into an inactive two-subunit forms. Catalyzes the phosphorylation of D-fructose 6-phosphate to fructose 1,6-bisphosphate by ATP, the first committing step of glycolysis. The polypeptide is ATP-dependent 6-phosphofructokinase 1 (Thermus thermophilus (strain ATCC 27634 / DSM 579 / HB8)).